The chain runs to 407 residues: 4-hydroxy-3-methylbut-2-en-1-yl diphosphate synthase (flavodoxin) (407 aa).

Residues cysteine 296, cysteine 299, cysteine 342, and glutamate 349 each contribute to the [4Fe-4S] cluster site.

Belongs to the IspG family. Requires [4Fe-4S] cluster as cofactor.

The enzyme catalyses (2E)-4-hydroxy-3-methylbut-2-enyl diphosphate + oxidized [flavodoxin] + H2O + 2 H(+) = 2-C-methyl-D-erythritol 2,4-cyclic diphosphate + reduced [flavodoxin]. It participates in isoprenoid biosynthesis; isopentenyl diphosphate biosynthesis via DXP pathway; isopentenyl diphosphate from 1-deoxy-D-xylulose 5-phosphate: step 5/6. Its function is as follows. Converts 2C-methyl-D-erythritol 2,4-cyclodiphosphate (ME-2,4cPP) into 1-hydroxy-2-methyl-2-(E)-butenyl 4-diphosphate. This is 4-hydroxy-3-methylbut-2-en-1-yl diphosphate synthase (flavodoxin) from Methylococcus capsulatus (strain ATCC 33009 / NCIMB 11132 / Bath).